The primary structure comprises 449 residues: uncharacterized protein (449 aa).

Ser420 carries the phosphoserine modification.

Belongs to the NAD kinase family.

The protein localises to the cytoplasm. It localises to the nucleus. This is an uncharacterized protein from Schizosaccharomyces pombe (strain 972 / ATCC 24843) (Fission yeast).